A 105-amino-acid chain; its full sequence is Met repressor (105 aa).

Belongs to the MetJ family. Homodimer.

It is found in the cytoplasm. Its function is as follows. This regulatory protein, when combined with SAM (S-adenosylmethionine) represses the expression of the methionine regulon and of enzymes involved in SAM synthesis. This Pasteurella multocida (strain Pm70) protein is Met repressor.